Here is an 865-residue protein sequence, read N- to C-terminus: SWI/SNF chromatin-remodeling complex subunit sol1 (865 aa).

Disordered regions lie at residues 1–34 (MNNQ…QPAY), 54–92 (MMNT…ASNG), 116–143 (QEKE…QSRE), and 163–183 (VRQT…ANQL). Polar residues predominate over residues 17 to 30 (SYPTQGQSYNTQEE). Over residues 121–139 (AMQQQQQQQQQQQLYQRQM) the composition is skewed to low complexity. The region spanning 188–278 (AASFDKFMVS…YLLPYEEAWL (91 aa)) is the ARID domain. The tract at residues 288–380 (QQAKANHSAN…QTSSSAAPVD (93 aa)) is disordered. A compositionally biased stretch (polar residues) spans 328-353 (HSKSPSPAFTANRFSPAAPTTVSSER). Over residues 356-368 (PPYPSAPTRPTPP) the composition is skewed to pro residues. Serine 852 and serine 855 each carry phosphoserine.

This sequence belongs to the SWI1 family. As to quaternary structure, component of the SWI/SNF global transcription activator complex composed of at least arp9, arp42, snf5, snf22, snf30, sbf59, sol1, ssr1, ssr2, ssr3, ssr4 and tfg3.

Its subcellular location is the nucleus. In terms of biological role, component of the SWI/SNF complex, an ATP-dependent chromatin remodeling complex, required for the positive and negative regulation of gene expression of a large number of genes. It changes chromatin structure by altering DNA-histone contacts within a nucleosome, leading eventually to a change in nucleosome position, thus facilitating or repressing binding of gene-specific transcription factors. The sequence is that of SWI/SNF chromatin-remodeling complex subunit sol1 (sol1) from Schizosaccharomyces pombe (strain 972 / ATCC 24843) (Fission yeast).